The sequence spans 335 residues: Ornithine carbamoyltransferase 2, catabolic (335 aa).

Carbamoyl phosphate contacts are provided by residues 62 to 65, glutamine 89, arginine 113, and 140 to 143; these read STRT and HPTQ. Residues asparagine 172, aspartate 236, and 240–241 each bind L-ornithine; that span reads SM. Residues 277–278 and arginine 322 each bind carbamoyl phosphate; that span reads CL.

Belongs to the aspartate/ornithine carbamoyltransferase superfamily. OTCase family.

Its subcellular location is the cytoplasm. The enzyme catalyses carbamoyl phosphate + L-ornithine = L-citrulline + phosphate + H(+). The protein operates within amino-acid degradation; L-arginine degradation via ADI pathway; carbamoyl phosphate from L-arginine: step 2/2. Reversibly catalyzes the transfer of the carbamoyl group from carbamoyl phosphate (CP) to the N(epsilon) atom of ornithine (ORN) to produce L-citrulline. This is Ornithine carbamoyltransferase 2, catabolic (arcB2) from Staphylococcus epidermidis (strain ATCC 12228 / FDA PCI 1200).